A 507-amino-acid polypeptide reads, in one-letter code: Cell cycle serine/threonine-protein kinase hsk1 (507 aa).

The residue at position 22 (S22) is a Phosphoserine. A Protein kinase domain is found at 68–433 (YRLIEKIGEG…AEEALDHDFL (366 aa)). ATP-binding positions include 74–82 (IGEGTFSSV) and K129. D216 functions as the Proton acceptor in the catalytic mechanism. Residue T291 is modified to Phosphothreonine. Residues 475–507 (FKEQEETDEPTSLSKRKRSIDEILPNDALQDGA) are disordered. Phosphoserine is present on S493.

Belongs to the protein kinase superfamily. Ser/Thr protein kinase family. CDC7 subfamily. Heterodimer with the regulatory subunit him1/dfp1. May form homooligomeric complexes. Interacts with mcm10. Post-translationally, autophosphorylated. Phosphorylated by cds1 in vitro.

The protein resides in the nucleus. The enzyme catalyses L-seryl-[protein] + ATP = O-phospho-L-seryl-[protein] + ADP + H(+). It carries out the reaction L-threonyl-[protein] + ATP = O-phospho-L-threonyl-[protein] + ADP + H(+). Its activity is regulated as follows. Phosphorylation of exogenous substrates activated by Dfp1. Its function is as follows. Required for G1/S transition. Plays a role in DNA replication checkpoint signaling through regulating rad3 and cds1. Involved in the maintenance of mitotic chromosome structures during S phase through regulating the function of rad21. Required for initiation of mitotic DNA replication through phosphorylating mcm2/cdc19. Required for genome integrity. This is Cell cycle serine/threonine-protein kinase hsk1 (hsk1) from Schizosaccharomyces pombe (strain 972 / ATCC 24843) (Fission yeast).